Consider the following 230-residue polypeptide: Isoprenyl transferase (230 aa).

Residue D14 is part of the active site. Position 14 (D14) interacts with Mg(2+). Substrate is bound by residues G15–R18, W19, R27, H31, and S59–E61. N62 serves as the catalytic Proton acceptor. Residues W63, R65, R175, and R181–S183 each bind substrate. E194 contributes to the Mg(2+) binding site.

Belongs to the UPP synthase family. In terms of assembly, homodimer. Mg(2+) serves as cofactor.

Its function is as follows. Catalyzes the condensation of isopentenyl diphosphate (IPP) with allylic pyrophosphates generating different type of terpenoids. This is Isoprenyl transferase from Fusobacterium nucleatum subsp. nucleatum (strain ATCC 25586 / DSM 15643 / BCRC 10681 / CIP 101130 / JCM 8532 / KCTC 2640 / LMG 13131 / VPI 4355).